Consider the following 195-residue polypeptide: UPF0314 protein RL4541 (195 aa).

4 helical membrane-spanning segments follow: residues 15-35, 64-84, 127-147, and 150-170; these read FWFV…YMMG, WYTP…HLIL, GDSI…FFFA, and APVA…GYII.

The protein belongs to the UPF0314 family.

The protein localises to the cell membrane. In Rhizobium johnstonii (strain DSM 114642 / LMG 32736 / 3841) (Rhizobium leguminosarum bv. viciae), this protein is UPF0314 protein RL4541.